Consider the following 129-residue polypeptide: Large ribosomal subunit protein bL19 (129 aa).

Belongs to the bacterial ribosomal protein bL19 family.

Its function is as follows. This protein is located at the 30S-50S ribosomal subunit interface and may play a role in the structure and function of the aminoacyl-tRNA binding site. This chain is Large ribosomal subunit protein bL19, found in Granulibacter bethesdensis (strain ATCC BAA-1260 / CGDNIH1).